Here is a 489-residue protein sequence, read N- to C-terminus: Nuclear distribution protein PAC1 (489 aa).

Positions 66–98 (STVLRLQKKIIDLENEISNLNNIINSSNSDNNG) form a coiled coil. 7 WD repeats span residues 119–158 (QCENIVTTVKLHPNLPLVLNGCNDGNLYIWNISNDDNTIP), 164–205 (AHTR…RTLN), 206–246 (GHEH…SLKS), 249–291 (GHSE…GLAM), 328–368 (IPLE…IAPH), 389–428 (GHSSWVKCLCVHPNGRFIISGSDDKTIKFWDLSSLLETGS), and 437–486 (GHDG…NSIK).

It belongs to the WD repeat LIS1/nudF family. Self-associates. Interacts with NDL1 and dynein.

It is found in the cytoplasm. The protein resides in the cytoskeleton. It localises to the spindle pole. In terms of biological role, positively regulates the activity of the minus-end directed microtubule motor protein dynein. Plays a central role in positioning the mitotic spindle at the bud neck during cell division. Targets cytoplasmic dynein to microtubule plus ends, thereby promoting dynein-mediated microtubule sliding along the bud cortex and consequently the movement of the mitotic spindle to the bud neck. The protein is Nuclear distribution protein PAC1 of Candida dubliniensis (strain CD36 / ATCC MYA-646 / CBS 7987 / NCPF 3949 / NRRL Y-17841) (Yeast).